A 595-amino-acid chain; its full sequence is Laccase-18 (595 aa).

Positions 1-29 (MEKLSTAASLFCVVVAATALAMAVVGGEA) are cleaved as a signal peptide. Plastocyanin-like domains lie at 37–153 (MVHE…PRNG) and 162–316 (KDVP…YAGA). Residues asparagine 42 and asparagine 48 are each glycosylated (N-linked (GlcNAc...) asparagine). Cu cation contacts are provided by histidine 87 and histidine 89. N-linked (GlcNAc...) asparagine glycosylation is present at asparagine 121. 2 residues coordinate Cu cation: histidine 132 and histidine 134. Residues asparagine 206, asparagine 345, asparagine 382, asparagine 402, asparagine 409, asparagine 439, and asparagine 470 are each glycosylated (N-linked (GlcNAc...) asparagine). The region spanning 429 to 571 (DFPVRPPRPF…ATAFIVEDGP (143 aa)) is the Plastocyanin-like 3 domain. Asparagine 488, histidine 491, histidine 493, histidine 550, cysteine 551, histidine 552, histidine 556, and methionine 561 together coordinate Cu cation. The segment at 570–595 (GPTPETSLPPPPPEFKRCGTNGLSQP) is disordered.

This sequence belongs to the multicopper oxidase family. The cofactor is Cu cation.

It is found in the secreted. The protein localises to the extracellular space. It localises to the apoplast. It carries out the reaction 4 hydroquinone + O2 = 4 benzosemiquinone + 2 H2O. Functionally, lignin degradation and detoxification of lignin-derived products. This is Laccase-18 (LAC18) from Oryza sativa subsp. japonica (Rice).